Here is a 54-residue protein sequence, read N- to C-terminus: UPF0391 membrane protein msr3702 (54 aa).

Transmembrane regions (helical) follow at residues 4 to 24 and 30 to 50; these read WALV…GGIA and IAQI…LAGL.

It belongs to the UPF0391 family.

Its subcellular location is the cell membrane. The protein is UPF0391 membrane protein msr3702 of Mesorhizobium japonicum (strain LMG 29417 / CECT 9101 / MAFF 303099) (Mesorhizobium loti (strain MAFF 303099)).